Consider the following 126-residue polypeptide: Holo-[acyl-carrier-protein] synthase (126 aa).

Mg(2+) is bound by residues Asp9 and Glu58.

The protein belongs to the P-Pant transferase superfamily. AcpS family. The cofactor is Mg(2+).

It is found in the cytoplasm. It carries out the reaction apo-[ACP] + CoA = holo-[ACP] + adenosine 3',5'-bisphosphate + H(+). Functionally, transfers the 4'-phosphopantetheine moiety from coenzyme A to a Ser of acyl-carrier-protein. This Klebsiella pneumoniae (strain 342) protein is Holo-[acyl-carrier-protein] synthase.